The chain runs to 470 residues: MVSLKKKSKRRTTRLRSRIEKKAAESKRKQKRADKKNPQWKSRIPKDPGIPNSFPYKDKILAEIEEQKRIREEEKLARRASGQVDAAMEEEDAVDENGSLMISKIAEAAQASNPDDEEEFVMEEDNLGEAPLLVDSESYEASVKADTSRKAYDKEFKKVVEASDVILYVLDARDPEGTRSKDVERQVLASSAEEKRLIFVINKIDLVPSEVLNKWVTYLRNFFPTIPMRSASGSGNSNLKHQSASASSTISNLLKSLKSYSAKKKLKSSLTVGVIGYPNVGKSSVINALVNRSANGRSAPCPAGNVAGMTTSLREVKLDNKLRLVDSPGIVFPSSDSKDDLYRLVMLNAVSSTKVDDPVAVASYILQFLSRVPGQLERMFQRYELPPLLNTSDIDTATDFLVNIARKRGRLGRGGIPNLNAAANIVINDWHAGRIEWWAEPEVINEKNSSEVQDTQIVTEWAKEFDLNDF.

The segment covering M1–R16 has biased composition (basic residues). The tract at residues M1–Y56 is disordered. Residues S17–K27 are compositionally biased toward basic and acidic residues. The CP-type G domain occupies D153–P333. Residues N202–D205, G276–S283, and D326–G329 each bind GTP. The tract at residues A405 to G415 is RNA-binding.

The protein belongs to the TRAFAC class YlqF/YawG GTPase family.

It localises to the nucleus. It is found in the nucleolus. Functionally, required for optimal growth. Required for normal processing of ribosomal pre-rRNA. Required for nuclear export of ribosomal protein rpl2501. The polypeptide is GTPase grn1 (Schizosaccharomyces pombe (strain 972 / ATCC 24843) (Fission yeast)).